The chain runs to 100 residues: Large ribosomal subunit protein bL27 (100 aa).

A propeptide spanning residues 1–9 (MLSINLSLC) is cleaved from the precursor.

The protein belongs to the bacterial ribosomal protein bL27 family. The N-terminus is cleaved by ribosomal processing cysteine protease Prp.

This chain is Large ribosomal subunit protein bL27, found in Clostridium acetobutylicum (strain ATCC 824 / DSM 792 / JCM 1419 / IAM 19013 / LMG 5710 / NBRC 13948 / NRRL B-527 / VKM B-1787 / 2291 / W).